Here is a 750-residue protein sequence, read N- to C-terminus: Neprilysin (750 aa).

A compositionally biased stretch (polar residues) spans 1–14 (MGRSESQMDITDIN). Residues 1-20 (MGRSESQMDITDINTPKPKK) are disordered. Gly-2 carries the N-myristoyl glycine lipid modification. The Cytoplasmic segment spans residues 2–28 (GRSESQMDITDINTPKPKKKQRWTPLE). Ser-4 and Ser-6 each carry phosphoserine. Residues 16–23 (PKPKKKQR) carry the Stop-transfer sequence motif. A helical; Signal-anchor for type II membrane protein membrane pass occupies residues 29 to 51 (ISLSVLVLLLTVIAVTMIALYAT). At 52–750 (YDDGICKSSD…MNPEKKCRVW (699 aa)) the chain is on the extracellular side. In terms of domain architecture, Peptidase M13 spans 56–750 (ICKSSDCIKS…MNPEKKCRVW (695 aa)). Intrachain disulfides connect Cys-57-Cys-62, Cys-80-Cys-735, Cys-88-Cys-695, Cys-143-Cys-411, Cys-234-Cys-242, and Cys-621-Cys-747. Arg-103 serves as a coordination point for a peptide. An N-linked (GlcNAc...) asparagine glycan is attached at Asn-145. 3 N-linked (GlcNAc...) asparagine glycosylation sites follow: Asn-285, Asn-311, and Asn-325. His-584 contributes to the Zn(2+) binding site. Glu-585 is a catalytic residue. His-588 contributes to the Zn(2+) binding site. N-linked (GlcNAc...) asparagine glycosylation is present at Asn-628. Zn(2+) is bound at residue Glu-647. Catalysis depends on Asp-651, which acts as the Proton donor.

Belongs to the peptidase M13 family. The cofactor is Zn(2+). In terms of processing, myristoylation is a determinant of membrane targeting. Glycosylation at Asn-628 is necessary both for surface expression and neutral endopeptidase activity.

The protein resides in the cell membrane. The catalysed reaction is Preferential cleavage of polypeptides between hydrophobic residues, particularly with Phe or Tyr at P1'.. It carries out the reaction substance P + H2O = substance P(1-9) + L-Leu-L-Met-NH2. The enzyme catalyses substance P + H2O = substance P(1-7) + L-Phe-Gly-L-Leu-L-Met-NH2. It catalyses the reaction neurotensin + H2O = neurotensin(1-11) + L-isoleucyl-L-leucine. The catalysed reaction is neurotensin + H2O = neurotensin(1-10) + L-tyrosyl-L-isoleucyl-L-leucine. Its activity is regulated as follows. Inhibited by mixanpril, an orally-active drug used for the treatment of hypertension. Functionally, thermolysin-like specificity, but is almost confined on acting on polypeptides of up to 30 amino acids. Biologically important in the destruction of opioid peptides such as Met- and Leu-enkephalins by cleavage of a Gly-Phe bond. Catalyzes cleavage of bradykinin, substance P and neurotensin peptides. Able to cleave angiotensin-1, angiotensin-2 and angiotensin 1-9. Involved in the degradation of atrial natriuretic factor (ANF) and brain natriuretic factor (BNP(1-32)). Displays UV-inducible elastase activity toward skin preelastic and elastic fibers. This chain is Neprilysin (MME), found in Oryctolagus cuniculus (Rabbit).